A 150-amino-acid chain; its full sequence is D-aminoacyl-tRNA deacylase (150 aa).

A Gly-cisPro motif, important for rejection of L-amino acids motif is present at residues 138–139; that stretch reads GP.

This sequence belongs to the DTD family. Homodimer.

The protein resides in the cytoplasm. It carries out the reaction glycyl-tRNA(Ala) + H2O = tRNA(Ala) + glycine + H(+). The enzyme catalyses a D-aminoacyl-tRNA + H2O = a tRNA + a D-alpha-amino acid + H(+). An aminoacyl-tRNA editing enzyme that deacylates mischarged D-aminoacyl-tRNAs. Also deacylates mischarged glycyl-tRNA(Ala), protecting cells against glycine mischarging by AlaRS. Acts via tRNA-based rather than protein-based catalysis; rejects L-amino acids rather than detecting D-amino acids in the active site. By recycling D-aminoacyl-tRNA to D-amino acids and free tRNA molecules, this enzyme counteracts the toxicity associated with the formation of D-aminoacyl-tRNA entities in vivo and helps enforce protein L-homochirality. In Phocaeicola vulgatus (strain ATCC 8482 / DSM 1447 / JCM 5826 / CCUG 4940 / NBRC 14291 / NCTC 11154) (Bacteroides vulgatus), this protein is D-aminoacyl-tRNA deacylase.